The chain runs to 260 residues: Tryptophan synthase alpha chain (260 aa).

Catalysis depends on proton acceptor residues Glu52 and Asp63.

It belongs to the TrpA family. As to quaternary structure, tetramer of two alpha and two beta chains.

It carries out the reaction (1S,2R)-1-C-(indol-3-yl)glycerol 3-phosphate + L-serine = D-glyceraldehyde 3-phosphate + L-tryptophan + H2O. It participates in amino-acid biosynthesis; L-tryptophan biosynthesis; L-tryptophan from chorismate: step 5/5. The alpha subunit is responsible for the aldol cleavage of indoleglycerol phosphate to indole and glyceraldehyde 3-phosphate. The polypeptide is Tryptophan synthase alpha chain (Streptococcus thermophilus (strain ATCC BAA-250 / LMG 18311)).